Reading from the N-terminus, the 692-residue chain is Tripartite terminase subunit 1 (692 aa).

The C3H1-type zinc finger occupies 190 to 218 (CYLCYEELQMTPNNGSSVQKRLNGVLCEH). An ATP-binding site is contributed by 634-641 (YNELYGQR).

It belongs to the herpesviridae TRM1 protein family. As to quaternary structure, associates with TRM2 and TRM3 to form the tripartite terminase complex. Interacts with portal protein.

The protein localises to the host nucleus. Its function is as follows. Component of the molecular motor that translocates viral genomic DNA in empty capsid during DNA packaging. Forms a tripartite terminase complex together with TRM2 and TRM3 in the host cytoplasm. Once the complex reaches the host nucleus, it interacts with the capsid portal vertex. This portal forms a ring in which genomic DNA is translocated into the capsid. TRM1 carries an endonuclease activity that plays an important role for the cleavage of concatemeric viral DNA into unit length genomes. In Elephas maximus (Indian elephant), this protein is Tripartite terminase subunit 1.